Here is a 261-residue protein sequence, read N- to C-terminus: Cytochrome c oxidase subunit 3 (261 aa).

Residues 1–15 (MAHQAHAYHMVDPSP) lie on the Mitochondrial matrix side of the membrane. The helical transmembrane segment at 16–34 (WPLTGAVAALLMTSGLAVW) threads the bilayer. The Mitochondrial intermembrane segment spans residues 35-40 (FHFHSM). Residues 41–66 (YLLYLGLTLLLLTMVQWWRDIIREGT) traverse the membrane as a helical segment. Over 67–72 (FQGHHT) the chain is Mitochondrial matrix. The chain crosses the membrane as a helical span at residues 73-105 (PPVQKGLRYGMILFITSEVFFFLGFFWAFYHSS). Over 106-128 (LAPTPELGGCWPPTGIYPLDPFE) the chain is Mitochondrial intermembrane. Residues 129-152 (VPLLNTAVLLASGVTVTWAHHSLM) traverse the membrane as a helical segment. Residues 153–155 (EGN) are Mitochondrial matrix-facing. The helical transmembrane segment at 156 to 183 (RKEAIQALTLTVLLGFYFTALQAMEYYE) threads the bilayer. Topologically, residues 184-190 (APFTIAD) are mitochondrial intermembrane. A helical membrane pass occupies residues 191 to 223 (GVYGSTFFVATGFHGLHVIIGSTFLMVCLLRQI). Over 224 to 232 (QYHFTSEHH) the chain is Mitochondrial matrix. The chain crosses the membrane as a helical span at residues 233–256 (FGFERAAWYWHFVDVVWLFLYVSI). Topologically, residues 257–261 (YWWGS) are mitochondrial intermembrane.

This sequence belongs to the cytochrome c oxidase subunit 3 family. Component of the cytochrome c oxidase (complex IV, CIV), a multisubunit enzyme composed of 14 subunits. The complex is composed of a catalytic core of 3 subunits MT-CO1, MT-CO2 and MT-CO3, encoded in the mitochondrial DNA, and 11 supernumerary subunits COX4I, COX5A, COX5B, COX6A, COX6B, COX6C, COX7A, COX7B, COX7C, COX8 and NDUFA4, which are encoded in the nuclear genome. The complex exists as a monomer or a dimer and forms supercomplexes (SCs) in the inner mitochondrial membrane with NADH-ubiquinone oxidoreductase (complex I, CI) and ubiquinol-cytochrome c oxidoreductase (cytochrome b-c1 complex, complex III, CIII), resulting in different assemblies (supercomplex SCI(1)III(2)IV(1) and megacomplex MCI(2)III(2)IV(2)).

It localises to the mitochondrion inner membrane. The enzyme catalyses 4 Fe(II)-[cytochrome c] + O2 + 8 H(+)(in) = 4 Fe(III)-[cytochrome c] + 2 H2O + 4 H(+)(out). In terms of biological role, component of the cytochrome c oxidase, the last enzyme in the mitochondrial electron transport chain which drives oxidative phosphorylation. The respiratory chain contains 3 multisubunit complexes succinate dehydrogenase (complex II, CII), ubiquinol-cytochrome c oxidoreductase (cytochrome b-c1 complex, complex III, CIII) and cytochrome c oxidase (complex IV, CIV), that cooperate to transfer electrons derived from NADH and succinate to molecular oxygen, creating an electrochemical gradient over the inner membrane that drives transmembrane transport and the ATP synthase. Cytochrome c oxidase is the component of the respiratory chain that catalyzes the reduction of oxygen to water. Electrons originating from reduced cytochrome c in the intermembrane space (IMS) are transferred via the dinuclear copper A center (CU(A)) of subunit 2 and heme A of subunit 1 to the active site in subunit 1, a binuclear center (BNC) formed by heme A3 and copper B (CU(B)). The BNC reduces molecular oxygen to 2 water molecules using 4 electrons from cytochrome c in the IMS and 4 protons from the mitochondrial matrix. In Squalus acanthias (Spiny dogfish), this protein is Cytochrome c oxidase subunit 3 (MT-CO3).